The following is a 404-amino-acid chain: 26S proteasome regulatory subunit 6A-B (404 aa).

192 to 199 contributes to the ATP binding site; the sequence is GPPGTGKT.

It belongs to the AAA ATPase family. In terms of assembly, may form a heterodimer with a related family member.

The protein resides in the cytoplasm. The protein localises to the nucleus. The 26S proteasome is involved in the ATP-dependent degradation of ubiquitinated proteins. The regulatory (or ATPase) complex confers ATP dependency and substrate specificity to the 26S complex. The sequence is that of 26S proteasome regulatory subunit 6A-B (psmc3-b) from Xenopus laevis (African clawed frog).